We begin with the raw amino-acid sequence, 184 residues long: Cytidylate kinase (184 aa).

8-16 (GQPGSGKTT) is a binding site for ATP.

The protein belongs to the cytidylate kinase family. Type 2 subfamily.

The protein localises to the cytoplasm. It catalyses the reaction CMP + ATP = CDP + ADP. The catalysed reaction is dCMP + ATP = dCDP + ADP. This chain is Cytidylate kinase, found in Pyrobaculum islandicum (strain DSM 4184 / JCM 9189 / GEO3).